Consider the following 555-residue polypeptide: Potassium-transporting ATPase potassium-binding subunit (555 aa).

10 helical membrane passes run 2–22, 60–80, 130–150, 173–193, 246–266, 278–298, 374–394, 412–432, 483–503, and 525–545; these read IWVAVVITMLLFILVAKPTGI, QYALSLVLLNGFMIVVVYFIF, IGITFLMFAAPATTLALVMAF, VFLPITFMAALVFVALGVPQT, MSNILQMMLMMLLPTALPFTY, ILFVSLFMVFLLGFITITTSE, AGFVNIIMYAIIAVFISGLMV, LIAVTILFHPLLILGFSALAL, LVMFLGRYFSLITMLAVAASL, and GIFIGTIVIVGALTFFPMLVL.

Belongs to the KdpA family. In terms of assembly, the system is composed of three essential subunits: KdpA, KdpB and KdpC.

The protein resides in the cell membrane. Functionally, part of the high-affinity ATP-driven potassium transport (or Kdp) system, which catalyzes the hydrolysis of ATP coupled with the electrogenic transport of potassium into the cytoplasm. This subunit binds the extracellular potassium ions and delivers the ions to the membrane domain of KdpB through an intramembrane tunnel. The sequence is that of Potassium-transporting ATPase potassium-binding subunit from Bacillus cereus (strain AH187).